We begin with the raw amino-acid sequence, 224 residues long: Germin-like protein 1-2 (224 aa).

The first 29 residues, 1 to 29 (MASSRSVVLRVLVAVAVVAAAGAPRLAVA), serve as a signal peptide directing secretion. Residues cysteine 38 and cysteine 53 are joined by a disulfide bond. The region spanning 67-215 (DAIVQAPSTS…TFLMGEDEVG (149 aa)) is the Cupin type-1 domain. Asparagine 82 is a glycosylation site (N-linked (GlcNAc...) asparagine). Positions 115, 117, 122, and 161 each coordinate Mn(2+). A glycan (N-linked (GlcNAc...) asparagine) is linked at asparagine 170.

It belongs to the germin family. Oligomer (believed to be a pentamer but probably hexamer).

It localises to the secreted. It is found in the extracellular space. The protein localises to the apoplast. In terms of biological role, may play a role in plant defense. Probably has no oxalate oxidase activity even if the active site is conserved. This Oryza sativa subsp. japonica (Rice) protein is Germin-like protein 1-2.